We begin with the raw amino-acid sequence, 238 residues long: Glycerol uptake facilitator protein 4 (238 aa).

Helical transmembrane passes span 2–22 (IHQL…GVGV) and 39–59 (IFAI…FGNV). Residues 62–64 (NPA) carry the NPA 1 motif. The next 3 helical transmembrane spans lie at 80–100 (FIPY…IVWI), 135–155 (FFVE…ISEV), and 158–178 (PGIV…GLGG). Positions 185 to 187 (NLA) match the NPA 2 motif. A helical transmembrane segment spans residues 211 to 231 (YGIIVPGIAPFVGAACAALFM).

This sequence belongs to the MIP/aquaporin (TC 1.A.8) family.

The protein resides in the cell membrane. Transporter that facilitates the transmembrane diffusion of water, dihydroxyacetone, glycerol, urea, H(2)O(2) and D/L-lactic acid. Is involved in the cellular racemization of lactate and lactate metabolism, but has likely a more general physiological role. The transported molecule is indeed lactic acid and not the lactate anion, in agreement with the assumption that, with very few exceptions, MIPs (major intrinsic proteins) only facilitate the transport of uncharged solutes. In Lactiplantibacillus plantarum (strain ATCC BAA-793 / NCIMB 8826 / WCFS1) (Lactobacillus plantarum), this protein is Glycerol uptake facilitator protein 4.